A 345-amino-acid polypeptide reads, in one-letter code: UDP-N-acetylenolpyruvoylglucosamine reductase (345 aa).

Residues L16–S186 enclose the FAD-binding PCMH-type domain. The active site involves R162. Catalysis depends on S232, which acts as the Proton donor. E328 is a catalytic residue.

The protein belongs to the MurB family. FAD serves as cofactor.

It is found in the cytoplasm. The enzyme catalyses UDP-N-acetyl-alpha-D-muramate + NADP(+) = UDP-N-acetyl-3-O-(1-carboxyvinyl)-alpha-D-glucosamine + NADPH + H(+). It participates in cell wall biogenesis; peptidoglycan biosynthesis. Functionally, cell wall formation. The sequence is that of UDP-N-acetylenolpyruvoylglucosamine reductase from Yersinia pestis.